The sequence spans 214 residues: Cytochrome b (214 aa).

A run of 4 helical transmembrane segments spans residues 31 to 51, 75 to 96, 111 to 131, and 176 to 196; these read FGSM…FLAI, WIMQ…YIHI, WLSG…GYVL, and FFAL…IHIL. Residues His81 and His95 each coordinate heme b. Heme b-binding residues include His180 and His194. Residue His199 participates in a ubiquinone binding.

This sequence belongs to the cytochrome b family. In terms of assembly, the cytochrome bc1 complex contains 3 respiratory subunits (MT-CYB, CYC1 and UQCRFS1), 2 core proteins (UQCRC1 and UQCRC2) and probably 6 low-molecular weight proteins. Requires heme b as cofactor.

The protein localises to the mitochondrion inner membrane. Component of the ubiquinol-cytochrome c reductase complex (complex III or cytochrome b-c1 complex) that is part of the mitochondrial respiratory chain. The b-c1 complex mediates electron transfer from ubiquinol to cytochrome c. Contributes to the generation of a proton gradient across the mitochondrial membrane that is then used for ATP synthesis. This chain is Cytochrome b (MT-CYB), found in Bothrops bilineatus (Green jararaca).